The following is a 219-amino-acid chain: uncharacterized protein (219 aa).

Residues 70-102 (VHIGDNHPEPKNESKTQPKIESKKEPTLKQEEQ) form a disordered region. Positions 73–101 (GDNHPEPKNESKTQPKIESKKEPTLKQEE) are enriched in basic and acidic residues. Positions 96-120 (TLKQEEQTIQAEEEAQKIAKEETRE) form a coiled coil. The next 3 helical transmembrane spans lie at 126 to 146 (GGEIIIDIMLGILLGIAVNML), 153 to 173 (IFGLKGTAKFPIQLVLIVIVL), and 192 to 212 (TYGVIFIPIFITAQRNFAIFF).

It is found in the membrane. This is an uncharacterized protein from Acanthamoeba polyphaga mimivirus (APMV).